The primary structure comprises 684 residues: 77 kDa membrane protein (684 aa).

An N-terminal signal peptide occupies residues 1–30 (MKFKSLITTTLALGVLASTGANFNNNEASA). MAP repeat units lie at residues 45–154 (GYSK…EDKK), 156–265 (DKAN…ENKA), 266–374 (KRNY…KADR), 375–474 (YVPY…TGTK), 475–584 (AKAD…KKNN), and 586–684 (SNNV…ELKF).

The protein localises to the cell membrane. In terms of biological role, binds various plasma and ECM-proteins. This Staphylococcus aureus (strain COL) protein is 77 kDa membrane protein.